The sequence spans 243 residues: Leucyl/phenylalanyl-tRNA--protein transferase (243 aa).

The protein belongs to the L/F-transferase family.

The protein localises to the cytoplasm. It carries out the reaction N-terminal L-lysyl-[protein] + L-leucyl-tRNA(Leu) = N-terminal L-leucyl-L-lysyl-[protein] + tRNA(Leu) + H(+). The enzyme catalyses N-terminal L-arginyl-[protein] + L-leucyl-tRNA(Leu) = N-terminal L-leucyl-L-arginyl-[protein] + tRNA(Leu) + H(+). The catalysed reaction is L-phenylalanyl-tRNA(Phe) + an N-terminal L-alpha-aminoacyl-[protein] = an N-terminal L-phenylalanyl-L-alpha-aminoacyl-[protein] + tRNA(Phe). In terms of biological role, functions in the N-end rule pathway of protein degradation where it conjugates Leu, Phe and, less efficiently, Met from aminoacyl-tRNAs to the N-termini of proteins containing an N-terminal arginine or lysine. This chain is Leucyl/phenylalanyl-tRNA--protein transferase, found in Xylella fastidiosa (strain 9a5c).